We begin with the raw amino-acid sequence, 450 residues long: Chromosomal replication initiator protein DnaA (450 aa).

The interval 1-73 (MNTKELWIEV…KNILKKLTGI (73 aa)) is domain I, interacts with DnaA modulators. A domain II region spans residues 73–104 (IQYNISFELEKNINKQASVISKIDTLTENNNL). The tract at residues 105-326 (AYYENYTFEN…GAIKRLLFLA (222 aa)) is domain III, AAA+ region. The ATP site is built by glycine 149, glycine 151, lysine 152, and threonine 153. Residues 327–450 (VMNKKPNEII…NAIRRKIEGR (124 aa)) form a domain IV, binds dsDNA region.

This sequence belongs to the DnaA family. In terms of assembly, oligomerizes as a right-handed, spiral filament on DNA at oriC.

It localises to the cytoplasm. Its function is as follows. Plays an essential role in the initiation and regulation of chromosomal replication. ATP-DnaA binds to the origin of replication (oriC) to initiate formation of the DNA replication initiation complex once per cell cycle. Binds the DnaA box (a 9 base pair repeat at the origin) and separates the double-stranded (ds)DNA. Forms a right-handed helical filament on oriC DNA; dsDNA binds to the exterior of the filament while single-stranded (ss)DNA is stabiized in the filament's interior. The ATP-DnaA-oriC complex binds and stabilizes one strand of the AT-rich DNA unwinding element (DUE), permitting loading of DNA polymerase. After initiation quickly degrades to an ADP-DnaA complex that is not apt for DNA replication. Binds acidic phospholipids. The polypeptide is Chromosomal replication initiator protein DnaA (Spiroplasma citri).